Here is a 348-residue protein sequence, read N- to C-terminus: Gamma-glutamyl hydrolase 1 (348 aa).

A signal peptide spans 1–23; it reads MIDNNCLYKEELNRNSYSGLAKE. The region spanning 46-342 is the Gamma-glutamyl hydrolase domain; it reads SPDPNLNYRP…RGYDEVYIFT (297 aa). Residue Cys156 is the Nucleophile of the active site. The active site involves His269.

Belongs to the peptidase C26 family. As to expression, highly expressed in roots and at lower levels in leaves, stems and siliques.

It localises to the vacuole. The protein resides in the secreted. Its subcellular location is the extracellular space. It is found in the cell wall. It catalyses the reaction (6S)-5,6,7,8-tetrahydrofolyl-(gamma-L-Glu)(n) + (n-1) H2O = (6S)-5,6,7,8-tetrahydrofolate + (n-1) L-glutamate. Cleaves the polyglutamate sidechains of folate polyglutamates in the vacuole. Is important for polyglutamyl tail length determination before vacuolar exit. Plays a role in folate stability and intracellular folate content. The protein is Gamma-glutamyl hydrolase 1 (GGH1) of Arabidopsis thaliana (Mouse-ear cress).